Reading from the N-terminus, the 553-residue chain is Pseudouridylate synthase RPUSD2 (553 aa).

A disordered region spans residues 76 to 135 (AVGKQVPESGDQAQGGEGQLPSNGEQTPAPVADSGKRKKRRGATGERVVPPPKKRRTGVS). Residue aspartate 287 is part of the active site. Position 490 is a phosphothreonine (threonine 490).

It belongs to the pseudouridine synthase RluA family.

It carries out the reaction a uridine in mRNA = a pseudouridine in mRNA. Functionally, pseudouridine synthase that catalyzes pseudouridylation of mRNAs. This Mus musculus (Mouse) protein is Pseudouridylate synthase RPUSD2.